The chain runs to 573 residues: Sulfate adenylyltransferase (573 aa).

The N-terminal stretch occupies residues 1-169; it reads MANSPHGGVL…LEAVNRLQHY (169 aa). The interval 170–394 is catalytic; sequence DFVELRYTPS…LRESHPPRSQ (225 aa). Position 197 (Gln197) interacts with sulfate. ATP is bound by residues 197 to 200 and 291 to 294; these read QTRN and GRDH. Active-site residues include Thr198, Arg199, and Asn200. Arg199 provides a ligand contact to sulfate. Ala295 contacts sulfate. ATP is bound at residue Met333. Residues 395–573 are allosteric regulation domain; adenylyl-sulfate kinase-like; it reads QGFTIFLTGY…LESQGLLDRF (179 aa). 3'-phosphoadenylyl sulfate is bound by residues 434–437, Arg451, 477–478, and Arg515; these read ETVR and IA.

It in the N-terminal section; belongs to the sulfate adenylyltransferase family. In the C-terminal section; belongs to the APS kinase family. As to quaternary structure, homohexamer. Dimer of trimers.

Its subcellular location is the cytoplasm. The enzyme catalyses sulfate + ATP + H(+) = adenosine 5'-phosphosulfate + diphosphate. Its pathway is sulfur metabolism; hydrogen sulfide biosynthesis; sulfite from sulfate: step 1/3. With respect to regulation, allosterically inhibited by 3'-phosphoadenosine 5'-phosphosulfate (PAPS). Catalyzes the first intracellular reaction of sulfate assimilation, forming adenosine-5'-phosphosulfate (APS) from inorganic sulfate and ATP. Plays an important role in sulfate activation as a component of the biosynthesis pathway of sulfur-containing amino acids. The sequence is that of Sulfate adenylyltransferase from Chaetomium globosum (strain ATCC 6205 / CBS 148.51 / DSM 1962 / NBRC 6347 / NRRL 1970) (Soil fungus).